Here is a 394-residue protein sequence, read N- to C-terminus: Obg-like ATPase 1 (394 aa).

Residues 25–282 (LKIGIVGLPN…MPPDEAAKYC (258 aa)) enclose the OBG-type G domain. Residues 34–39 (NVGKST), 56–60 (FCTID), and 94–97 (DIAG) contribute to the ATP site. The Mg(2+) site is built by S38 and T58. A GTP-binding site is contributed by F129. ATP is bound by residues 230–231 (NM), M231, and 263–265 (SCA). A GTP-binding site is contributed by 263 to 265 (SCA). Residues 303 to 386 (HLIYFFTAGP…QDADIIFFKF (84 aa)) form the TGS domain.

This sequence belongs to the TRAFAC class OBG-HflX-like GTPase superfamily. OBG GTPase family. YchF/OLA1 subfamily. As to quaternary structure, monomer (Potential). Interacts with GAP1. The cofactor is Mg(2+).

The protein localises to the cytoplasm. It is found in the cell membrane. The protein resides in the cytosol. Its activity is regulated as follows. Activated by GAP1. Hydrolyzes ATP, and can also hydrolyze GTP with lower efficiency. Has lower affinity for GTP (Potential). Exhibits GTPase activity. Exhibits similar binding affinities and hydrolytic activities toward both GTP and ATP. Binds to the 26 S ribosomal RNA in vitro, but not to the 5.8 S or 18 S rRNA. Confers sensitivity to salinity stress by suppressing the anti-oxidation enzymatic activities and increasing lipid peroxidation thus leading to the accumulation of reactive oxygen species (ROS). The sequence is that of Obg-like ATPase 1 from Oryza sativa subsp. indica (Rice).